A 488-amino-acid polypeptide reads, in one-letter code: Proline--tRNA ligase (488 aa).

Belongs to the class-II aminoacyl-tRNA synthetase family. ProS type 3 subfamily. In terms of assembly, homodimer.

It is found in the cytoplasm. The enzyme catalyses tRNA(Pro) + L-proline + ATP = L-prolyl-tRNA(Pro) + AMP + diphosphate. Catalyzes the attachment of proline to tRNA(Pro) in a two-step reaction: proline is first activated by ATP to form Pro-AMP and then transferred to the acceptor end of tRNA(Pro). This is Proline--tRNA ligase from Borreliella afzelii (strain PKo) (Borrelia afzelii).